A 227-amino-acid polypeptide reads, in one-letter code: Cytochrome c oxidase subunit 2 (227 aa).

The Mitochondrial intermembrane portion of the chain corresponds to 1-14 (MAYPVQLGFQDAAS). A helical transmembrane segment spans residues 15 to 45 (PIMEELLYFHDHTLMIMFLISSLVLYIISLM). Residues 46-59 (LTTELMHTNTMDAQ) lie on the Mitochondrial matrix side of the membrane. The helical transmembrane segment at 60–87 (EVETVWTILPAAILILIALPSLRILYMM) threads the bilayer. Residues 88 to 227 (DEITTPSLTL…HFEEWLLSML (140 aa)) are Mitochondrial intermembrane-facing. Residues histidine 161, cysteine 196, glutamate 198, cysteine 200, histidine 204, and methionine 207 each coordinate Cu cation. Residue glutamate 198 participates in Mg(2+) binding.

It belongs to the cytochrome c oxidase subunit 2 family. In terms of assembly, component of the cytochrome c oxidase (complex IV, CIV), a multisubunit enzyme composed of 14 subunits. The complex is composed of a catalytic core of 3 subunits MT-CO1, MT-CO2 and MT-CO3, encoded in the mitochondrial DNA, and 11 supernumerary subunits COX4I, COX5A, COX5B, COX6A, COX6B, COX6C, COX7A, COX7B, COX7C, COX8 and NDUFA4, which are encoded in the nuclear genome. The complex exists as a monomer or a dimer and forms supercomplexes (SCs) in the inner mitochondrial membrane with NADH-ubiquinone oxidoreductase (complex I, CI) and ubiquinol-cytochrome c oxidoreductase (cytochrome b-c1 complex, complex III, CIII), resulting in different assemblies (supercomplex SCI(1)III(2)IV(1) and megacomplex MCI(2)III(2)IV(2)). Found in a complex with TMEM177, COA6, COX18, COX20, SCO1 and SCO2. Interacts with TMEM177 in a COX20-dependent manner. Interacts with COX20. Interacts with COX16. Cu cation serves as cofactor.

It is found in the mitochondrion inner membrane. It catalyses the reaction 4 Fe(II)-[cytochrome c] + O2 + 8 H(+)(in) = 4 Fe(III)-[cytochrome c] + 2 H2O + 4 H(+)(out). Functionally, component of the cytochrome c oxidase, the last enzyme in the mitochondrial electron transport chain which drives oxidative phosphorylation. The respiratory chain contains 3 multisubunit complexes succinate dehydrogenase (complex II, CII), ubiquinol-cytochrome c oxidoreductase (cytochrome b-c1 complex, complex III, CIII) and cytochrome c oxidase (complex IV, CIV), that cooperate to transfer electrons derived from NADH and succinate to molecular oxygen, creating an electrochemical gradient over the inner membrane that drives transmembrane transport and the ATP synthase. Cytochrome c oxidase is the component of the respiratory chain that catalyzes the reduction of oxygen to water. Electrons originating from reduced cytochrome c in the intermembrane space (IMS) are transferred via the dinuclear copper A center (CU(A)) of subunit 2 and heme A of subunit 1 to the active site in subunit 1, a binuclear center (BNC) formed by heme A3 and copper B (CU(B)). The BNC reduces molecular oxygen to 2 water molecules using 4 electrons from cytochrome c in the IMS and 4 protons from the mitochondrial matrix. The sequence is that of Cytochrome c oxidase subunit 2 (MT-CO2) from Hapalemur griseus (Gray gentle lemur).